A 1503-amino-acid chain; its full sequence is Dynein axonemal assembly factor 1 homolog (1503 aa).

LRR repeat units lie at residues 34–56 (RLNDVLYLHYQGFQCIENLEEYT), 57–78 (ELKCLWLECNAISEIQGLEKLG), 79–100 (KLKCLFLQNNLITKIENLDPCR), 101–122 (ELDTLNLSSNHIRKIQNIGTNI), 125–146 (VLNTLTIASNYLKDSDSLSDLI), and 150–171 (TLSVLDLSNNRIDDILIVKIFE). The LRRCT domain maps to 185 to 223 (PVVSRLPQYRKTLILACKELTYLDSRPVFPRDRACAEAW). Disordered regions lie at residues 249–280 (SINCTIRMRNSHRPPDQQDPLLRSSDSEDDTC), 305–328 (EQPISDHGTSTSSSVEDKDGTSSQ), 956–1033 (DSGD…DHDE), and 1295–1315 (STNNHSFSTKKTLPTKTSTSE). Acidic residues predominate over residues 973-985 (TESEDYDTAEDEY). Residues 1014 to 1031 (QKQDKPDTVEEVGKKNDH) show a composition bias toward basic and acidic residues. Residues 1303 to 1314 (TKKTLPTKTSTS) are compositionally biased toward low complexity.

It belongs to the DNAAF1 family.

Its subcellular location is the cell projection. It is found in the cilium. In terms of biological role, cilium-specific protein required for cilia structures. The protein is Dynein axonemal assembly factor 1 homolog (dtr) of Drosophila erecta (Fruit fly).